The sequence spans 375 residues: Ribonuclease D (375 aa).

The region spanning Y3–E169 is the 3'-5' exonuclease domain. Positions R210–A289 constitute an HRDC domain.

It belongs to the RNase D family. The cofactor is a divalent metal cation.

The protein localises to the cytoplasm. It carries out the reaction Exonucleolytic cleavage that removes extra residues from the 3'-terminus of tRNA to produce 5'-mononucleotides.. Exonuclease involved in the 3' processing of various precursor tRNAs. Initiates hydrolysis at the 3'-terminus of an RNA molecule and releases 5'-mononucleotides. This chain is Ribonuclease D, found in Escherichia coli (strain K12).